The chain runs to 263 residues: 4-hydroxy-tetrahydrodipicolinate reductase (263 aa).

NAD(+) is bound by residues Gly-7–Met-12 and Asp-33. Residue Arg-34 participates in NADP(+) binding. NAD(+) is bound by residues Gly-96–Thr-98 and Ala-120–Met-123. The active-site Proton donor/acceptor is His-153. Residue His-154 coordinates (S)-2,3,4,5-tetrahydrodipicolinate. Lys-157 acts as the Proton donor in catalysis. Gly-163–Thr-164 is a (S)-2,3,4,5-tetrahydrodipicolinate binding site.

Belongs to the DapB family.

It localises to the cytoplasm. It carries out the reaction (S)-2,3,4,5-tetrahydrodipicolinate + NAD(+) + H2O = (2S,4S)-4-hydroxy-2,3,4,5-tetrahydrodipicolinate + NADH + H(+). The enzyme catalyses (S)-2,3,4,5-tetrahydrodipicolinate + NADP(+) + H2O = (2S,4S)-4-hydroxy-2,3,4,5-tetrahydrodipicolinate + NADPH + H(+). It functions in the pathway amino-acid biosynthesis; L-lysine biosynthesis via DAP pathway; (S)-tetrahydrodipicolinate from L-aspartate: step 4/4. Its function is as follows. Catalyzes the conversion of 4-hydroxy-tetrahydrodipicolinate (HTPA) to tetrahydrodipicolinate. The sequence is that of 4-hydroxy-tetrahydrodipicolinate reductase from Ralstonia nicotianae (strain ATCC BAA-1114 / GMI1000) (Ralstonia solanacearum).